A 158-amino-acid polypeptide reads, in one-letter code: NADH-quinone oxidoreductase subunit B (158 aa).

Positions 37, 38, 102, and 132 each coordinate [4Fe-4S] cluster.

The protein belongs to the complex I 20 kDa subunit family. NDH-1 is composed of 14 different subunits. Subunits NuoB, C, D, E, F, and G constitute the peripheral sector of the complex. Requires [4Fe-4S] cluster as cofactor.

The protein localises to the cell inner membrane. It catalyses the reaction a quinone + NADH + 5 H(+)(in) = a quinol + NAD(+) + 4 H(+)(out). Functionally, NDH-1 shuttles electrons from NADH, via FMN and iron-sulfur (Fe-S) centers, to quinones in the respiratory chain. The immediate electron acceptor for the enzyme in this species is believed to be ubiquinone. Couples the redox reaction to proton translocation (for every two electrons transferred, four hydrogen ions are translocated across the cytoplasmic membrane), and thus conserves the redox energy in a proton gradient. The polypeptide is NADH-quinone oxidoreductase subunit B (Acidithiobacillus ferrooxidans (strain ATCC 23270 / DSM 14882 / CIP 104768 / NCIMB 8455) (Ferrobacillus ferrooxidans (strain ATCC 23270))).